Reading from the N-terminus, the 86-residue chain is Small ribosomal subunit protein bS16 (86 aa).

Belongs to the bacterial ribosomal protein bS16 family.

This chain is Small ribosomal subunit protein bS16, found in Myxococcus xanthus (strain DK1622).